The chain runs to 360 residues: G-protein coupled receptor 15 (360 aa).

The Extracellular portion of the chain corresponds to 1–33 (MDPEETSVYLDYYYATSPNPDIRETHSHVPYTS). A helical membrane pass occupies residues 34–54 (VFLPVFYIAVFLTGVLGNLVL). The Cytoplasmic segment spans residues 55-69 (MGALHFKPGSRRLID). The helical transmembrane segment at 70–90 (IFIINLAASDFIFLVTLPLWV) threads the bilayer. The Extracellular portion of the chain corresponds to 91-120 (DKEASLGLWRTGSFLCKGSSYMISVNMHCS). Residues 121–141 (VFLLTCMSVDRYLAIVCPVVS) form a helical membrane-spanning segment. The Cytoplasmic segment spans residues 142-149 (RKFRRTDC). Residues 150-170 (AYVVCASIWFISCLLGLPTLL) traverse the membrane as a helical segment. At 171-192 (SRELTLIDDKPYCAEKKATPLK) the chain is on the extracellular side. A helical membrane pass occupies residues 193 to 213 (LIWSLVALIFTFFVPLLSIVT). At 214–239 (CYCRIARKLCAHYQQSGKHNKKLKKS) the chain is on the cytoplasmic side. A helical transmembrane segment spans residues 240-260 (IKIIFIVVAAFLVSWLPFNTS). The Extracellular segment spans residues 261–284 (KLLAIVSGLQQERYFPSAILQLGM). A helical transmembrane segment spans residues 285-305 (EVSGPLAFANSCVNPFIYYIF). Over 306–360 (DSYIRRAIVHCLCPCLKNYDFGSSTETSDSHLTKALSTFIHAEDFTRRRKRSVSL) the chain is Cytoplasmic. At Ser-359 the chain carries Phosphoserine.

Belongs to the G-protein coupled receptor 1 family. As to quaternary structure, interacts with adapter YWHAE; this interaction promotes ER-to-Golgi transport of GPR15. Post-translationally, phosphorylation is necessary for YWHAE binding and efficient surface expression. O-glycosylated. Sialylated O-glycans in the N-terminal tail inhibits binding of GPR15LG. In terms of processing, sulfation is required for efficient binding of GPR15LG.

It localises to the cell membrane. G protein-coupled receptor that plays an important role in immune homeostasis. Acts via its natural ligand GPR15LG, a chemokine-like polypeptide strongly expressed in gastrointestinal tissues. GPR15-GPR15LG signaling axis regulates intestinal homeostasis and inflammation through the migration of immune cells. Controls thereby the specific homing of T-cells, particularly FOXP3+ regulatory T-cells (Tregs), to the large intestine lamina propria. Also required for skin localization of thymus-derived dendritic epidermal T-cells. Plays an important role in mediating cytoprotective function as well as angiogenesis of thrombomodulin. Mechanistically, preferentially signals through the Gi/o pathway to inhibit adenylate cyclase activity and activate a phosphatidylinositol-calcium second messenger system that regulates the release of Ca(2+) ions from intracellular stores. The protein is G-protein coupled receptor 15 (GPR15) of Chlorocebus aethiops (Green monkey).